The following is a 387-amino-acid chain: 3-hydroxy-D-aspartate aldolase (387 aa).

Position 62 is an N6-(pyridoxal phosphate)lysine (lysine 62). Pyridoxal 5'-phosphate is bound by residues glutamine 85, threonine 238, 256–257, and tyrosine 265; that span reads GS. Residues histidine 355 and aspartate 357 each contribute to the Mg(2+) site.

Belongs to the DSD1 family. As to quaternary structure, homodimer. Requires pyridoxal 5'-phosphate as cofactor. It depends on Mg(2+) as a cofactor.

It catalyses the reaction (3S)-3-hydroxy-D-aspartate = glyoxylate + glycine. It carries out the reaction (3R)-3-hydroxy-D-aspartate = glyoxylate + glycine. Functionally, catalyzes the condensation of glyoxylate and glycine into (2R,3S)-beta-hydroxyaspartate ((3S)-3-hydroxy-D-aspartate). Is essential for the growth of P.denitrificans in the presence of glycolate and glyoxylate since it functions in glyoxylate assimilation via the beta-hydroxyaspartate cycle (BHAC). Is also able to catalyze the reverse reaction in vitro, i.e. the cleavage of (3S)-3-hydroxy-D-aspartate, and that of D-threonine to a lesser extent. The polypeptide is 3-hydroxy-D-aspartate aldolase (Paracoccus denitrificans (strain Pd 1222)).